The primary structure comprises 337 residues: Probable cytosolic iron-sulfur protein assembly protein CIAO1 homolog (337 aa).

WD repeat units lie at residues Asp15–Met54, Ser65–Val104, Gly109–Val148, Pro154–Gln193, Cys199–Ala238, Asn253–Val292, and Arg301–Ile337.

The protein belongs to the WD repeat CIA1 family.

Functionally, essential component of the cytosolic iron-sulfur (Fe/S) protein assembly machinery. Required for the maturation of extramitochondrial Fe/S proteins. The protein is Probable cytosolic iron-sulfur protein assembly protein CIAO1 homolog of Caenorhabditis elegans.